Reading from the N-terminus, the 167-residue chain is NAD(P)H-quinone oxidoreductase subunit I, chloroplastic (167 aa).

2 consecutive 4Fe-4S ferredoxin-type domains span residues 55 to 84 (GRIH…VDWK) and 95 to 124 (LNYS…MTEE). Residues Cys64, Cys67, Cys70, Cys74, Cys104, Cys107, Cys110, and Cys114 each coordinate [4Fe-4S] cluster.

This sequence belongs to the complex I 23 kDa subunit family. In terms of assembly, NDH is composed of at least 16 different subunits, 5 of which are encoded in the nucleus. It depends on [4Fe-4S] cluster as a cofactor.

It is found in the plastid. It localises to the chloroplast thylakoid membrane. It carries out the reaction a plastoquinone + NADH + (n+1) H(+)(in) = a plastoquinol + NAD(+) + n H(+)(out). The enzyme catalyses a plastoquinone + NADPH + (n+1) H(+)(in) = a plastoquinol + NADP(+) + n H(+)(out). NDH shuttles electrons from NAD(P)H:plastoquinone, via FMN and iron-sulfur (Fe-S) centers, to quinones in the photosynthetic chain and possibly in a chloroplast respiratory chain. The immediate electron acceptor for the enzyme in this species is believed to be plastoquinone. Couples the redox reaction to proton translocation, and thus conserves the redox energy in a proton gradient. This is NAD(P)H-quinone oxidoreductase subunit I, chloroplastic from Vitis vinifera (Grape).